The following is a 298-amino-acid chain: Protein OS-9 homolog (298 aa).

The signal sequence occupies residues 1–25; that stretch reads MGLAGGARVVLFVVAAAAAAALTAA. The N-linked (GlcNAc...) asparagine glycan is linked to asparagine 95. One can recognise an MRH domain in the interval 121-246; it reads DQCFYRHEGW…TVQSPMLCKN (126 aa). A disulfide bridge links cysteine 123 with cysteine 136. A mannooligosaccharide derivative is bound by residues tryptophan 130, tryptophan 131, and glutamine 143. Residues asparagine 171 and asparagine 197 are each glycosylated (N-linked (GlcNAc...) asparagine). 2 disulfide bridges follow: cysteine 201/cysteine 232 and cysteine 216/cysteine 244. A mannooligosaccharide derivative is bound by residues aspartate 202, arginine 208, glutamate 228, and tyrosine 234.

Belongs to the OS-9 family. As to quaternary structure, interacts with HRD3.

Its subcellular location is the endoplasmic reticulum. In terms of biological role, lectin which functions in endoplasmic reticulum (ER) quality control and ER-associated degradation (ERAD). May bind terminally misfolded non-glycosylated proteins as well as improperly folded glycoproteins, retain them in the ER, and possibly transfer them to the ubiquitination machinery and promote their degradation. The protein is Protein OS-9 homolog of Oryza sativa subsp. japonica (Rice).